The following is a 41-amino-acid chain: Photosystem II reaction center protein J (41 aa).

Residues 9 to 29 form a helical membrane-spanning segment; it reads IPLWFVGMVGGLAALGLLAIF.

Belongs to the PsbJ family. PSII is composed of 1 copy each of membrane proteins PsbA, PsbB, PsbC, PsbD, PsbE, PsbF, PsbH, PsbI, PsbJ, PsbK, PsbL, PsbM, PsbT, PsbX, PsbY, PsbZ, Psb30/Ycf12, at least 3 peripheral proteins of the oxygen-evolving complex and a large number of cofactors. It forms dimeric complexes.

It is found in the plastid. It localises to the chloroplast thylakoid membrane. Functionally, one of the components of the core complex of photosystem II (PSII). PSII is a light-driven water:plastoquinone oxidoreductase that uses light energy to abstract electrons from H(2)O, generating O(2) and a proton gradient subsequently used for ATP formation. It consists of a core antenna complex that captures photons, and an electron transfer chain that converts photonic excitation into a charge separation. The sequence is that of Photosystem II reaction center protein J from Ostreococcus tauri.